Reading from the N-terminus, the 565-residue chain is NAD-dependent malic enzyme (565 aa).

Tyrosine 104 (proton donor) is an active-site residue. Residue arginine 157 coordinates NAD(+). Lysine 175 serves as the catalytic Proton acceptor. A divalent metal cation-binding residues include glutamate 246, aspartate 247, and aspartate 270. Positions 270 and 418 each coordinate NAD(+).

The protein belongs to the malic enzymes family. Homotetramer. Mg(2+) serves as cofactor. It depends on Mn(2+) as a cofactor.

It carries out the reaction (S)-malate + NAD(+) = pyruvate + CO2 + NADH. It catalyses the reaction oxaloacetate + H(+) = pyruvate + CO2. The polypeptide is NAD-dependent malic enzyme (Shigella sonnei (strain Ss046)).